The sequence spans 318 residues: Pantothenate kinase (318 aa).

96–103 is an ATP binding site; it reads GSVAVGKS.

It belongs to the prokaryotic pantothenate kinase family.

The protein resides in the cytoplasm. It carries out the reaction (R)-pantothenate + ATP = (R)-4'-phosphopantothenate + ADP + H(+). It functions in the pathway cofactor biosynthesis; coenzyme A biosynthesis; CoA from (R)-pantothenate: step 1/5. This chain is Pantothenate kinase, found in Rhodopseudomonas palustris (strain BisB5).